The chain runs to 180 residues: Cytidylate kinase (180 aa).

7 to 15 provides a ligand contact to ATP; that stretch reads GLPGSGTTT.

This sequence belongs to the cytidylate kinase family. Type 2 subfamily.

Its subcellular location is the cytoplasm. It catalyses the reaction CMP + ATP = CDP + ADP. The catalysed reaction is dCMP + ATP = dCDP + ADP. This is Cytidylate kinase from Methanosarcina barkeri (strain Fusaro / DSM 804).